A 179-amino-acid polypeptide reads, in one-letter code: Probable splicing factor, arginine/serine-rich 6 (179 aa).

In terms of domain architecture, RRM spans 3 to 76; sequence AKVYVGGLPS…VRARVELSTG (74 aa). Positions 75–179 are disordered; it reads TGQRRGGGGR…RSRSRSASPH (105 aa). Positions 78-93 are enriched in gly residues; the sequence is RRGGGGRGGGFGGRGG. A compositionally biased stretch (basic and acidic residues) spans 94–160; sequence GGRDRSPYRG…RSPQERDRSH (67 aa). The segment covering 161–173 has biased composition (basic residues); the sequence is SKSRSRSRSRSRS.

The protein belongs to the splicing factor SR family. Post-translationally, extensively phosphorylated on serine residues in the RS domain.

The protein resides in the nucleus. Plays a functionally redundant role in shifting germ cell sexual differentiation in hermaprodites. Required for the development of somatic gonad structures and for progression from larval stage to adulthood. This chain is Probable splicing factor, arginine/serine-rich 6 (rsp-6), found in Caenorhabditis elegans.